The following is a 34-amino-acid chain: Photosystem I reaction center subunit XII (34 aa).

The chain crosses the membrane as a helical span at residues 9-29; it reads LIILGLIVVMHAGVLALRLGI.

Belongs to the PsaM family.

The protein resides in the cellular thylakoid membrane. This Prochlorococcus marinus subsp. pastoris (strain CCMP1986 / NIES-2087 / MED4) protein is Photosystem I reaction center subunit XII.